We begin with the raw amino-acid sequence, 436 residues long: Zinc finger protein 101 (436 aa).

Residues V4–T82 enclose the KRAB domain. The C2H2-type 1 zinc-finger motif lies at C102–H124. The segment covering K128 to R141 has biased composition (basic and acidic residues). Residues K128 to T164 form a disordered region. Positions I151–P163 are enriched in polar residues. A C2H2-type 2 zinc finger spans residues Y169–H191. The C2H2-type 3; degenerate zinc-finger motif lies at Y197–H219. 7 consecutive C2H2-type zinc fingers follow at residues Y225–H247, Y253–H276, H282–H304, Y310–H332, Y338–H360, Y366–H388, and F394–H416.

This sequence belongs to the krueppel C2H2-type zinc-finger protein family. Expressed in a variety of adult and fetal tissues.

It localises to the nucleus. Its function is as follows. May be involved in transcriptional regulation. This Homo sapiens (Human) protein is Zinc finger protein 101 (ZNF101).